Here is a 590-residue protein sequence, read N- to C-terminus: Aspartate--tRNA(Asp/Asn) ligase (590 aa).

Position 173 (E173) interacts with L-aspartate. An aspartate region spans residues 197-200 (QIFK). R219 is a binding site for L-aspartate. Residues 219 to 221 (RDE) and Q228 contribute to the ATP site. H450 lines the L-aspartate pocket. ATP is bound at residue E484. R491 contributes to the L-aspartate binding site. Residue 536-539 (GLDR) coordinates ATP.

The protein belongs to the class-II aminoacyl-tRNA synthetase family. Type 1 subfamily. As to quaternary structure, homodimer.

The protein localises to the cytoplasm. The catalysed reaction is tRNA(Asx) + L-aspartate + ATP = L-aspartyl-tRNA(Asx) + AMP + diphosphate. Its function is as follows. Aspartyl-tRNA synthetase with relaxed tRNA specificity since it is able to aspartylate not only its cognate tRNA(Asp) but also tRNA(Asn). Reaction proceeds in two steps: L-aspartate is first activated by ATP to form Asp-AMP and then transferred to the acceptor end of tRNA(Asp/Asn). This chain is Aspartate--tRNA(Asp/Asn) ligase, found in Coxiella burnetii (strain RSA 331 / Henzerling II).